We begin with the raw amino-acid sequence, 204 residues long: UPF0637 protein SAR1080 (204 aa).

It belongs to the UPF0637 family.

In Staphylococcus aureus (strain MRSA252), this protein is UPF0637 protein SAR1080.